The sequence spans 60 residues: Metallothionein (60 aa).

Residues 1–28 (MDPCDCSKTGKCNCGGSCTCTNCSCTSC) form a beta region. Residues C4, C6, C12, C14, C18, C20, C23, C25, C28, C32, C33, C35, C36, C40, C43, C47, C49, C54, C58, and C59 each coordinate a divalent metal cation. Residues 29–60 (KKSCCACCPSGCTKCASGCVCKGKTCDTTCCQ) are alpha.

Belongs to the metallothionein superfamily. Type 1 family.

Its function is as follows. Metallothioneins have a high content of cysteine residues that bind various heavy metals. The sequence is that of Metallothionein (mt) from Oryzias latipes (Japanese rice fish).